The sequence spans 139 residues: Protein cornichon homolog 4 (139 aa).

Helical transmembrane passes span 5–25 (VFLFSLLDCCALIFLSVYFII), 57–77 (IVTVLMLVSLHWFIFLLNLPV), and 118–138 (LGFYLLCFFMYLYSMILALIN).

It belongs to the cornichon family. As to quaternary structure, interacts with Sec23/24 complex components SEC24B and SEC24D. Interacts with CCR5. Interacts with ADRB2 in the early secretory pathway.

The protein localises to the membrane. It is found in the endoplasmic reticulum. The protein resides in the endoplasmic reticulum-Golgi intermediate compartment. Involved in G protein-coupled receptors (GPCRs) trafficking from the endoplasmic reticulum to the cell surface; it promotes the exit of GPCRs from the early secretory pathway, likely through interaction with the COPII machinery. This chain is Protein cornichon homolog 4 (Cnih4), found in Mus musculus (Mouse).